Here is a 599-residue protein sequence, read N- to C-terminus: Endoribonuclease ZC3H12A (599 aa).

The tract at residues 1 to 40 (MSGPCGEKPVLEASPTMSLWEFEDSHSRQGTPRPGQELAA) is disordered. The segment at 42-87 (EASALELQMKVDFFRKLGYSSTEIHSVLQKLGVQADTNTVLGELVK) is ubiquitin association domain. The segment at 81 to 150 (VLGELVKHGT…DGSNVAMSHG (70 aa)) is necessary for interaction with TANK. The interval 90 to 133 (TATERERQTSPDPCPQLPLVPRGGGTPKAPNLEPPLPEEEKEGS) is disordered. At serine 99 the chain carries Phosphoserine. An RNase region spans residues 112–297 (GGGTPKAPNL…LDNFLRKKPL (186 aa)). Positions 135 to 290 (LRPVVIDGSN…LGRHGPSLDN (156 aa)) constitute an RNase NYN domain. An RNA binding region spans residues 214–220 (RRVGGKR). Mg(2+) is bound at residue aspartate 226. Residues 301 to 324 (HRKQPCPYGRKCTYGIKCRFFHPE) form a C3H1-type zinc finger. Residues 301–457 (HRKQPCPYGR…SELWGVRGGG (157 aa)) are necessary for interaction with ZC3H12D. The disordered stretch occupies residues 343–420 (LSPPRAPSKD…SGSSFGPTDW (78 aa)). At serine 344 the chain carries Phosphoserine. A compositionally biased stretch (low complexity) spans 358–375 (PSPSSQSSSLLTESEQCS). The span at 386 to 399 (SPGSRQEGLTQTYA) shows a compositional bias: polar residues. Serine 438 and serine 442 each carry phosphoserine. Residues 522–546 (PPPTSVLQEPPVQSPGAGRSPWGRA) form a disordered region.

This sequence belongs to the ZC3H12 family. Oligomer. Found in a deubiquitination complex with TANK, USP10 and ZC3H12A; this complex inhibits genotoxic stress- or interleukin-1-beta-mediated NF-kappaB activation by promoting IKBKG or TRAF6 deubiquitination. Interacts with IKBKG; this interaction increases in response to DNA damage. Interacts with TANK; this interaction increases in response to DNA damage and serves as a bridge to anchor both TANK and USP10 into a deubiquitinating complex. Interacts with TRAF6; this interaction increases in response to DNA damage and is stimulated by TANK. Interacts with USP10; this interaction increases in response to DNA damage and serves as a bridge to anchor both TANK and USP10 into a deubiquitinating complex. Interacts with ZC3H12D. Interacts with TNRC6A. Interacts with IKBKB/IKKB. Interacts with IKBKB/IKKB. Interacts with BTRC; the interaction occurs when ZC3H12A is phosphorylated in a IKBKB/IKKB-dependent manner. Interacts with IRAK1; this interaction increases the interaction between ZC3H12A and IKBKB/IKKB. Interacts with UPF1; this interaction occurs in a mRNA translationally active- and termination-dependent manner and is essential for ZC3H12A-mediated degradation of target mRNAs. Associates with ribosomes. Interacts with ubiquitin. In terms of assembly, (Microbial infection) Oligomerization is necessary for antiviral activity. Requires Mg(2+) as cofactor. In terms of processing, phosphorylated by IRAK1; phosphorylation is necessary for subsequent phosphorylation by the I-kappa-B-kinase (IKK) complex. Phosphorylated by I-kappa-B-kinase (IKK) subunits IKBKB/IKKB and CHUK/IKKA at Ser-438 and Ser-442; these phosphorylations promote ubiquitin proteasome-mediated degradation of ZC3H12A and hence facilitates rapid and robust production of IL-6 mRNA in response to toll-like receptor (TLR) or IL-1 receptor stimuli. Post-translationally, (Microbial infection) Rapidly degraded in activated T-cells in response to phorbol 13-acetate 12-myristate (PMA) during HIV-1 viral infection. Ubiquitinated; ubiquitination is induced in response to interleukin IL1 receptor stimuli in a IKBKB/IKKB and IRAK1-dependent manner, leading to proteasome-mediated degradation. In terms of processing, proteolytically cleaved between Arg-111 and Arg-214 by MALT1 in activated T-cells; cleavage at Arg-111 is critical for promoting ZC3H12A degradation in response to T-cell receptor (TCR) stimulation, and hence is necessary for prolonging the stability of a set of mRNAs controlling T-cell activation and Th17 cell differentiation. As to expression, expressed in heart, placenta, spleen, kidney, liver and lung. Expressed in leukocytes. Expressed in monocyte.

Its subcellular location is the nucleus. It localises to the cytoplasm. The protein resides in the P-body. The protein localises to the rough endoplasmic reticulum membrane. It is found in the cytoplasmic granule. Functionally, endoribonuclease involved in various biological functions such as cellular inflammatory response and immune homeostasis, glial differentiation of neuroprogenitor cells, cell death of cardiomyocytes, adipogenesis and angiogenesis. Functions as an endoribonuclease involved in mRNA decay. Modulates the inflammatory response by promoting the degradation of a set of translationally active cytokine-induced inflammation-related mRNAs, such as IL6 and IL12B, during the early phase of inflammation. Prevents aberrant T-cell-mediated immune reaction by degradation of multiple mRNAs controlling T-cell activation, such as those encoding cytokines (IL6 and IL2), cell surface receptors (ICOS, TNFRSF4 and TNFR2) and transcription factor (REL). Inhibits cooperatively with ZC3H12A the differentiation of helper T cells Th17 in lungs. They repress target mRNA encoding the Th17 cell-promoting factors IL6, ICOS, REL, IRF4, NFKBID and NFKBIZ. The cooperation requires RNA-binding by RC3H1 and the nuclease activity of ZC3H12A. Together with RC3H1, destabilizes TNFRSF4/OX40 mRNA by binding to the conserved stem loop structure in its 3'UTR. Self regulates by destabilizing its own mRNA. Cleaves mRNA harboring a stem-loop (SL), often located in their 3'-UTRs, during the early phase of inflammation in a helicase UPF1-dependent manner. Plays a role in the inhibition of microRNAs (miRNAs) biogenesis. Cleaves the terminal loop of a set of precursor miRNAs (pre-miRNAs) important for the regulation of the inflammatory response leading to their degradation, and thus preventing the biosynthesis of mature miRNAs. Also plays a role in promoting angiogenesis in response to inflammatory cytokines by inhibiting the production of antiangiogenic microRNAs via its anti-dicer RNase activity. Affects the overall ubiquitination of cellular proteins. Positively regulates deubiquitinase activity promoting the cleavage at 'Lys-48'- and 'Lys-63'-linked polyubiquitin chains on TNF receptor-associated factors (TRAFs), preventing JNK and NF-kappa-B signaling pathway activation, and hence negatively regulating macrophage-mediated inflammatory response and immune homeostasis. Also induces deubiquitination of the transcription factor HIF1A, probably leading to its stabilization and nuclear import, thereby positively regulating the expression of proangiogenic HIF1A-targeted genes. Involved in a TANK-dependent negative feedback response to attenuate NF-kappaB activation through the deubiquitination of IKBKG or TRAF6 in response to interleukin-1-beta (IL1B) stimulation or upon DNA damage. Prevents stress granule (SGs) formation and promotes macrophage apoptosis under stress conditions, including arsenite-induced oxidative stress, heat shock and energy deprivation. Plays a role in the regulation of macrophage polarization; promotes IL4-induced polarization of macrophages M1 into anti-inflammatory M2 state. May also act as a transcription factor that regulates the expression of multiple genes involved in inflammatory response, angiogenesis, adipogenesis and apoptosis. Functions as a positive regulator of glial differentiation of neuroprogenitor cells through an amyloid precursor protein (APP)-dependent signaling pathway. Attenuates septic myocardial contractile dysfunction in response to lipopolysaccharide (LPS) by reducing I-kappa-B-kinase (IKK)-mediated NF-kappa-B activation, and hence myocardial pro-inflammatory cytokine production. In terms of biological role, (Microbial infection) Binds to Japanese encephalitis virus (JEV) and Dengue virus (DEN) RNAs. Its function is as follows. (Microbial infection) Exhibits antiviral activity against HIV-1 in lymphocytes by decreasing the abundance of HIV-1 viral RNA species. The sequence is that of Endoribonuclease ZC3H12A from Homo sapiens (Human).